Here is a 153-residue protein sequence, read N- to C-terminus: uncharacterized protein (153 aa).

An N-terminal signal peptide occupies residues 1-25 (MKKRQYLKSLYVALLGTLCYLSVNA).

This is an uncharacterized protein from Pasteurella multocida (strain Pm70).